A 559-amino-acid polypeptide reads, in one-letter code: Nuclear envelope integral membrane protein (559 aa).

Positions 1–15 (MRLLTLALLVAGSLA) are cleaved as a signal peptide. Asn67, Asn81, and Asn114 each carry an N-linked (GlcNAc...) asparagine glycan. 5 consecutive transmembrane segments (helical) span residues 164–184 (YTSG…FIVW), 192–212 (IGVP…HFAW), 218–238 (IMIE…LISM), 267–287 (LIYF…ALII), and 290–310 (ICRG…KAVW). 2 N-linked (GlcNAc...) asparagine glycosylation sites follow: Asn408 and Asn465. 2 disordered regions span residues 475–494 (RRDS…PRMP) and 510–559 (KNGR…DADE). Residues 517–526 (PSSSTASGMT) show a composition bias toward polar residues. Residues 530–539 (YMRKARRIDA) show a composition bias toward basic and acidic residues.

The protein belongs to the NEMP family.

It is found in the nucleus inner membrane. Functionally, contributes to nuclear envelope stiffness in germ cells. Required for fertility. This chain is Nuclear envelope integral membrane protein, found in Caenorhabditis elegans.